We begin with the raw amino-acid sequence, 555 residues long: MIWVAVIITMLLFILVAKPTGVYLEKAFQGSKTLDKVFGPFEKLIFKITGVKEYNQTWKQYALSLVLLNGFMIVVVYFIFRLQGVLPLNPAHIEGMEPTLAFNTAISFMADTNLQHYSGENGLSYLSQLIGITFLMFAAPATTLALVMAFIRGLAGKELGNFFVDFTRALTRVFLPIAFIAALVFVALGVPQTLDGAVTAQTIDGAKQSILRGPVASFVSIKELGNNGGGFFGANSTHPFENPGQMSNILQMMLMMLLPTALPFTYGRMVGNKKQGRILFVSLFMVFLLGFITITTSELNGNPALNGMGIEHVQGSAEGKEVRFGTVFSSLYATVTTAAETGAVNTMHDTLTPIGGLVPLVNMMLNTVYGGVGAGFVNIIMYAIIAVFISGLMVGRTPEFLGKKIEGKEMKLIAVTILFHPLLILGFSALALSTNLGTDAISHSGFHGLTQVVYEYTSSAANNGSGFEGLGDNTPFWNITTGLVMFLGRYFSLITMLAVAASLKEKTVVPETVGTFRTDNSLFGGIFIGTIVIVGALTFFPMLVLGPIAEFLTLK.

The next 10 membrane-spanning stretches (helical) occupy residues 2-22 (IWVAVIITMLLFILVAKPTGV), 60-80 (QYALSLVLLNGFMIVVVYFIF), 130-150 (IGITFLMFAAPATTLALVMAF), 173-193 (VFLPIAFIAALVFVALGVPQT), 246-266 (MSNILQMMLMMLLPTALPFTY), 278-298 (ILFVSLFMVFLLGFITITTSE), 374-394 (AGFVNIIMYAIIAVFISGLMV), 412-432 (LIAVTILFHPLLILGFSALAL), 483-503 (LVMFLGRYFSLITMLAVAASL), and 525-545 (GIFIGTIVIVGALTFFPMLVL).

Belongs to the KdpA family. In terms of assembly, the system is composed of three essential subunits: KdpA, KdpB and KdpC.

It is found in the cell membrane. In terms of biological role, part of the high-affinity ATP-driven potassium transport (or Kdp) system, which catalyzes the hydrolysis of ATP coupled with the electrogenic transport of potassium into the cytoplasm. This subunit binds the extracellular potassium ions and delivers the ions to the membrane domain of KdpB through an intramembrane tunnel. The protein is Potassium-transporting ATPase potassium-binding subunit of Bacillus cereus (strain B4264).